Here is a 292-residue protein sequence, read N- to C-terminus: 4-diphosphocytidyl-2-C-methyl-D-erythritol kinase (292 aa).

K20 is a catalytic residue. Residue 103-113 (PMGGGIGGGSS) participates in ATP binding. The active site involves D145.

It belongs to the GHMP kinase family. IspE subfamily.

It carries out the reaction 4-CDP-2-C-methyl-D-erythritol + ATP = 4-CDP-2-C-methyl-D-erythritol 2-phosphate + ADP + H(+). Its pathway is isoprenoid biosynthesis; isopentenyl diphosphate biosynthesis via DXP pathway; isopentenyl diphosphate from 1-deoxy-D-xylulose 5-phosphate: step 3/6. Functionally, catalyzes the phosphorylation of the position 2 hydroxy group of 4-diphosphocytidyl-2C-methyl-D-erythritol. The sequence is that of 4-diphosphocytidyl-2-C-methyl-D-erythritol kinase from Cupriavidus metallidurans (strain ATCC 43123 / DSM 2839 / NBRC 102507 / CH34) (Ralstonia metallidurans).